Reading from the N-terminus, the 116-residue chain is Ribosome-binding factor A (116 aa).

This sequence belongs to the RbfA family. In terms of assembly, monomer. Binds 30S ribosomal subunits, but not 50S ribosomal subunits or 70S ribosomes.

Its subcellular location is the cytoplasm. One of several proteins that assist in the late maturation steps of the functional core of the 30S ribosomal subunit. Associates with free 30S ribosomal subunits (but not with 30S subunits that are part of 70S ribosomes or polysomes). Required for efficient processing of 16S rRNA. May interact with the 5'-terminal helix region of 16S rRNA. This is Ribosome-binding factor A from Streptococcus pyogenes serotype M3 (strain SSI-1).